The chain runs to 502 residues: Protein GIS3 (502 aa).

The protein localises to the cytoplasm. Its subcellular location is the nucleus. This Saccharomyces cerevisiae (strain ATCC 204508 / S288c) (Baker's yeast) protein is Protein GIS3 (GIS3).